The following is a 406-amino-acid chain: Acetate kinase (406 aa).

Asparagine 10 lines the Mg(2+) pocket. Lysine 17 is an ATP binding site. Residue arginine 92 participates in substrate binding. Residue aspartate 151 is the Proton donor/acceptor of the active site. Residues histidine 211–glycine 215, aspartate 286–arginine 288, and glycine 335–asparagine 339 each bind ATP. Glutamate 389 serves as a coordination point for Mg(2+).

It belongs to the acetokinase family. Homodimer. Mg(2+) serves as cofactor. It depends on Mn(2+) as a cofactor.

The protein resides in the cytoplasm. The catalysed reaction is acetate + ATP = acetyl phosphate + ADP. The protein operates within metabolic intermediate biosynthesis; acetyl-CoA biosynthesis; acetyl-CoA from acetate: step 1/2. In terms of biological role, catalyzes the formation of acetyl phosphate from acetate and ATP. Can also catalyze the reverse reaction. The chain is Acetate kinase from Buchnera aphidicola subsp. Cinara cedri (strain Cc).